The chain runs to 557 residues: Potassium-transporting ATPase potassium-binding subunit (557 aa).

The next 12 membrane-spanning stretches (helical) occupy residues 5 to 25 (GFLL…PLGS), 63 to 83 (LCAI…MLLG), 132 to 152 (GLTV…FALI), 170 to 190 (LLRI…LFFI), 253 to 273 (FVQM…FGEV), 283 to 303 (LLWA…WAEV), 329 to 349 (VLVS…AVIA), 356 to 376 (ALGG…FGGV), 379 to 399 (GLYG…LMIG), 416 to 436 (LTAL…ALAM), 484 to 504 (LLAF…MAIA), and 526 to 546 (LFVG…FIPA).

Belongs to the KdpA family. As to quaternary structure, the system is composed of three essential subunits: KdpA, KdpB and KdpC.

The protein resides in the cell inner membrane. Its function is as follows. Part of the high-affinity ATP-driven potassium transport (or Kdp) system, which catalyzes the hydrolysis of ATP coupled with the electrogenic transport of potassium into the cytoplasm. This subunit binds the periplasmic potassium ions and delivers the ions to the membrane domain of KdpB through an intramembrane tunnel. This Escherichia coli O9:H4 (strain HS) protein is Potassium-transporting ATPase potassium-binding subunit.